Consider the following 443-residue polypeptide: Chromosome partition protein MukF (443 aa).

The tract at residues 209 to 237 is leucine-zipper; sequence LDETSINLRELQDTLNAAGDKLQSQLLRI.

Belongs to the MukF family. In terms of assembly, interacts, and probably forms a ternary complex, with MukE and MukB via its C-terminal region. The complex formation is stimulated by calcium or magnesium. It is required for an interaction between MukE and MukB.

The protein localises to the cytoplasm. Its subcellular location is the nucleoid. Functionally, involved in chromosome condensation, segregation and cell cycle progression. May participate in facilitating chromosome segregation by condensation DNA from both sides of a centrally located replisome during cell division. Not required for mini-F plasmid partitioning. Probably acts via its interaction with MukB and MukE. Overexpression results in anucleate cells. It has a calcium binding activity. The sequence is that of Chromosome partition protein MukF from Haemophilus ducreyi (strain 35000HP / ATCC 700724).